The following is a 383-amino-acid chain: Probable butyrate kinase (383 aa).

This sequence belongs to the acetokinase family.

The protein resides in the cytoplasm. It catalyses the reaction butanoate + ATP = butanoyl phosphate + ADP. This chain is Probable butyrate kinase, found in Deinococcus radiodurans (strain ATCC 13939 / DSM 20539 / JCM 16871 / CCUG 27074 / LMG 4051 / NBRC 15346 / NCIMB 9279 / VKM B-1422 / R1).